The sequence spans 484 residues: EF-hand calcium-binding domain-containing protein 14 (484 aa).

3 disordered regions span residues 1-48 (MKKR…TDEE), 227-255 (GSMENNGSNQILPSPSPPSELDNKSHSES), and 313-395 (EQRT…FTSD). Over residues 37 to 48 (PDSDSESSTDEE) the composition is skewed to acidic residues. Polar residues-rich tracts occupy residues 228-239 (SMENNGSNQILP), 315-324 (RTNVSSSTME), and 335-347 (LVTNRSDTVQAQS). 2 consecutive EF-hand domains span residues 423 to 452 (SSIKDLQDLFHKTGQDVDGMLTYQELWNSL) and 453 to 484 (GSAMPRPESLRAFDSNGDGRYSFLELRLALGI). Ca(2+) is bound by residues D466, N468, D470, R472, and E477.

The protein is EF-hand calcium-binding domain-containing protein 14 (Efcab14) of Mus musculus (Mouse).